A 339-amino-acid polypeptide reads, in one-letter code: Anthranilate phosphoribosyltransferase (339 aa).

5-phospho-alpha-D-ribose 1-diphosphate is bound by residues G80, 83 to 84 (GD), 90 to 93 (NVST), 108 to 116 (KHGNRSVTS), and S120. G80 lines the anthranilate pocket. S92 lines the Mg(2+) pocket. Anthranilate is bound at residue N111. Position 166 (R166) interacts with anthranilate. Positions 225 and 226 each coordinate Mg(2+).

This sequence belongs to the anthranilate phosphoribosyltransferase family. In terms of assembly, homodimer. Mg(2+) is required as a cofactor.

The enzyme catalyses N-(5-phospho-beta-D-ribosyl)anthranilate + diphosphate = 5-phospho-alpha-D-ribose 1-diphosphate + anthranilate. It functions in the pathway amino-acid biosynthesis; L-tryptophan biosynthesis; L-tryptophan from chorismate: step 2/5. Its function is as follows. Catalyzes the transfer of the phosphoribosyl group of 5-phosphorylribose-1-pyrophosphate (PRPP) to anthranilate to yield N-(5'-phosphoribosyl)-anthranilate (PRA). The protein is Anthranilate phosphoribosyltransferase of Ignicoccus hospitalis (strain KIN4/I / DSM 18386 / JCM 14125).